Here is a 506-residue protein sequence, read N- to C-terminus: Cysteine--tRNA ligase (506 aa).

Residue Cys34 coordinates Zn(2+). Positions 36 to 46 (PTVYDFAHIGN) match the 'HIGH' region motif. Zn(2+) contacts are provided by Cys230, His269, and Glu273. Positions 302–306 (KMSKS) match the 'KMSKS' region motif. Lys305 provides a ligand contact to ATP.

The protein belongs to the class-I aminoacyl-tRNA synthetase family. As to quaternary structure, monomer. It depends on Zn(2+) as a cofactor.

It localises to the cytoplasm. The catalysed reaction is tRNA(Cys) + L-cysteine + ATP = L-cysteinyl-tRNA(Cys) + AMP + diphosphate. The sequence is that of Cysteine--tRNA ligase from Brucella ovis (strain ATCC 25840 / 63/290 / NCTC 10512).